Reading from the N-terminus, the 639-residue chain is ATP-dependent zinc metalloprotease FtsH (639 aa).

Residues 1 to 20 lie on the Cytoplasmic side of the membrane; the sequence is MNGNNNMNNNGKSNNKKKNK. Residues 21–41 traverse the membrane as a helical segment; that stretch reads NWILGLVVVFLISAIFMSYFI. Residues 42-120 are Periplasmic-facing; that stretch reads RGGESYKNVP…LSSGKSQASL (79 aa). Residues 121-141 traverse the membrane as a helical segment; that stretch reads IGVLLQTLPWILFFIFFFFIF. Residues 142 to 639 are Cytoplasmic-facing; it reads RQTQGGGGKV…KEVKGEDVKG (498 aa). 212 to 219 serves as a coordination point for ATP; it reads GSPGTGKT. Residue His434 participates in Zn(2+) binding. Glu435 is a catalytic residue. Zn(2+) contacts are provided by His438 and Asp510.

The protein in the central section; belongs to the AAA ATPase family. In the C-terminal section; belongs to the peptidase M41 family. In terms of assembly, homohexamer. It depends on Zn(2+) as a cofactor.

The protein localises to the cell inner membrane. In terms of biological role, acts as a processive, ATP-dependent zinc metallopeptidase for both cytoplasmic and membrane proteins. Plays a role in the quality control of integral membrane proteins. The chain is ATP-dependent zinc metalloprotease FtsH from Borreliella burgdorferi (strain ZS7) (Borrelia burgdorferi).